A 296-amino-acid chain; its full sequence is Transposase for insertion sequence element IS629 (296 aa).

The Integrase catalytic domain maps to 125 to 285; the sequence is VAERPDQLWV…TPPAEAEKAY (161 aa).

Involved in the transposition of the insertion sequence. In Shigella sonnei, this protein is Transposase for insertion sequence element IS629.